The primary structure comprises 223 residues: ATP phosphoribosyltransferase (223 aa).

It belongs to the ATP phosphoribosyltransferase family. Short subfamily. In terms of assembly, heteromultimer composed of HisG and HisZ subunits.

It is found in the cytoplasm. The enzyme catalyses 1-(5-phospho-beta-D-ribosyl)-ATP + diphosphate = 5-phospho-alpha-D-ribose 1-diphosphate + ATP. Its pathway is amino-acid biosynthesis; L-histidine biosynthesis; L-histidine from 5-phospho-alpha-D-ribose 1-diphosphate: step 1/9. In terms of biological role, catalyzes the condensation of ATP and 5-phosphoribose 1-diphosphate to form N'-(5'-phosphoribosyl)-ATP (PR-ATP). Has a crucial role in the pathway because the rate of histidine biosynthesis seems to be controlled primarily by regulation of HisG enzymatic activity. In Novosphingobium aromaticivorans (strain ATCC 700278 / DSM 12444 / CCUG 56034 / CIP 105152 / NBRC 16084 / F199), this protein is ATP phosphoribosyltransferase.